A 439-amino-acid polypeptide reads, in one-letter code: UDP-N-acetylmuramate--L-alanine ligase (439 aa).

Position 113 to 119 (113 to 119 (GSHGKTS)) interacts with ATP.

Belongs to the MurCDEF family.

It is found in the cytoplasm. It catalyses the reaction UDP-N-acetyl-alpha-D-muramate + L-alanine + ATP = UDP-N-acetyl-alpha-D-muramoyl-L-alanine + ADP + phosphate + H(+). The protein operates within cell wall biogenesis; peptidoglycan biosynthesis. Functionally, cell wall formation. The protein is UDP-N-acetylmuramate--L-alanine ligase of Lactobacillus delbrueckii subsp. bulgaricus (strain ATCC 11842 / DSM 20081 / BCRC 10696 / JCM 1002 / NBRC 13953 / NCIMB 11778 / NCTC 12712 / WDCM 00102 / Lb 14).